A 486-amino-acid chain; its full sequence is Cardiolipin synthase A (486 aa).

2 helical membrane-spanning segments follow: residues 3-23 (TFYTVISWLAIFGYWLLIASV) and 38-58 (MAWLLIIYILPLVGIIAYLSF). 2 consecutive PLD phosphodiesterase domains span residues 219 to 246 (MDLRQHRKVVLIDNFIAYTGSMNLVDPR) and 399 to 426 (EGGLLHTKSVLVDGQLSLVGTVNLDMRS). Residues H224, K226, D231, H404, K406, and D411 contribute to the active site.

The protein belongs to the phospholipase D family. Cardiolipin synthase subfamily. ClsA sub-subfamily.

The protein localises to the cell inner membrane. The enzyme catalyses 2 a 1,2-diacyl-sn-glycero-3-phospho-(1'-sn-glycerol) = a cardiolipin + glycerol. Its function is as follows. Catalyzes the reversible phosphatidyl group transfer from one phosphatidylglycerol molecule to another to form cardiolipin (CL) (diphosphatidylglycerol) and glycerol. This chain is Cardiolipin synthase A, found in Edwardsiella ictaluri (strain 93-146).